Reading from the N-terminus, the 269-residue chain is Phosphate import ATP-binding protein PstB (269 aa).

Positions 22 to 264 (AEVRDLNFYY…PVQQKTADYV (243 aa)) constitute an ABC transporter domain. 54–61 (GPSGCGKT) serves as a coordination point for ATP.

The protein belongs to the ABC transporter superfamily. Phosphate importer (TC 3.A.1.7) family. In terms of assembly, the complex is composed of two ATP-binding proteins (PstB), two transmembrane proteins (PstC and PstA) and a solute-binding protein (PstS).

It localises to the cell inner membrane. It carries out the reaction phosphate(out) + ATP + H2O = ADP + 2 phosphate(in) + H(+). In terms of biological role, part of the ABC transporter complex PstSACB involved in phosphate import. Responsible for energy coupling to the transport system. In Thermosynechococcus vestitus (strain NIES-2133 / IAM M-273 / BP-1), this protein is Phosphate import ATP-binding protein PstB.